We begin with the raw amino-acid sequence, 497 residues long: MELVVKSVAAASVKTATLVLPVGENRKLGTVAQAVDQACEGAISAVLKRGDLAGKPGQTLLLQNLSGLKAERVLLVGSGKEEALGDRAWRKLVASVAGVLKGLNGADAVLALDDIAVSNRDAHYGKYRLLAETLLDGEYVFDRFKSQKAEPRALKKVTLLADKAGQAEVERAVKHASAIASGMAFTRDLGNLPPNLCHPSYLAEQAKELGKAHKALKVEVLDEKKIKDLGMGAFYAVGQGSDQPPRLIVLNYQGGKKADKPFVLVGKGITFDTGGISLKPGAGMDEMKYDMCGAASVFGTLRAVLELQLPINLVCLLACAENMPSGGATRPGDIVTTMSGQTVEILNTDAEGRLVLCDTLTYAERFKPQAVIDIATLTGACIVALGSHTSGLMGNNDDLVGQLLDAGKRADDRAWQLPLFEEYQEQLDSPFADMGNIGGPKAGTITAGCFLSRFAKAYNWAHMDIAGTAWVSGGKDKGATGRPVPLLTQYLLDRAGA.

K267 and D272 together coordinate Mn(2+). K279 is an active-site residue. Mn(2+)-binding residues include D290, D349, and E351. R353 is an active-site residue.

Belongs to the peptidase M17 family. Mn(2+) is required as a cofactor.

Its subcellular location is the cytoplasm. The catalysed reaction is Release of an N-terminal amino acid, Xaa-|-Yaa-, in which Xaa is preferably Leu, but may be other amino acids including Pro although not Arg or Lys, and Yaa may be Pro. Amino acid amides and methyl esters are also readily hydrolyzed, but rates on arylamides are exceedingly low.. It catalyses the reaction Release of an N-terminal amino acid, preferentially leucine, but not glutamic or aspartic acids.. Functionally, presumably involved in the processing and regular turnover of intracellular proteins. Catalyzes the removal of unsubstituted N-terminal amino acids from various peptides. The sequence is that of Probable cytosol aminopeptidase from Pseudomonas putida (strain ATCC 47054 / DSM 6125 / CFBP 8728 / NCIMB 11950 / KT2440).